The primary structure comprises 156 residues: Small ribosomal subunit protein uS7 (156 aa).

In terms of assembly, part of the 30S ribosomal subunit. Contacts proteins S9 and S11.

One of the primary rRNA binding proteins, it binds directly to 16S rRNA where it nucleates assembly of the head domain of the 30S subunit. Is located at the subunit interface close to the decoding center, probably blocks exit of the E-site tRNA. The chain is Small ribosomal subunit protein uS7 from Rhodopseudomonas palustris (strain ATCC BAA-98 / CGA009).